A 665-amino-acid polypeptide reads, in one-letter code: DNA ligase (665 aa).

Residues 35-39 (DAIYD), 88-89 (SL), and Glu-117 each bind NAD(+). Residue Lys-119 is the N6-AMP-lysine intermediate of the active site. NAD(+) contacts are provided by Arg-140, Glu-174, Lys-290, and Lys-314. Residues Cys-406, Cys-409, Cys-424, and Cys-429 each coordinate Zn(2+). One can recognise a BRCT domain in the interval 588 to 665 (KKTERFAQLS…EEAFNELLVS (78 aa)).

Belongs to the NAD-dependent DNA ligase family. LigA subfamily. It depends on Mg(2+) as a cofactor. Requires Mn(2+) as cofactor.

The catalysed reaction is NAD(+) + (deoxyribonucleotide)n-3'-hydroxyl + 5'-phospho-(deoxyribonucleotide)m = (deoxyribonucleotide)n+m + AMP + beta-nicotinamide D-nucleotide.. In terms of biological role, DNA ligase that catalyzes the formation of phosphodiester linkages between 5'-phosphoryl and 3'-hydroxyl groups in double-stranded DNA using NAD as a coenzyme and as the energy source for the reaction. It is essential for DNA replication and repair of damaged DNA. The sequence is that of DNA ligase from Metamycoplasma arthritidis (strain 158L3-1) (Mycoplasma arthritidis).